A 175-amino-acid polypeptide reads, in one-letter code: Shikimate kinase (175 aa).

10 to 15 provides a ligand contact to ATP; sequence GAGKTT. Mg(2+) is bound at residue threonine 14. Residues aspartate 32, arginine 56, and glycine 78 each contribute to the substrate site. Arginine 116 lines the ATP pocket. Residue arginine 135 coordinates substrate.

The protein belongs to the shikimate kinase family. Monomer. Mg(2+) is required as a cofactor.

It localises to the cytoplasm. It carries out the reaction shikimate + ATP = 3-phosphoshikimate + ADP + H(+). The protein operates within metabolic intermediate biosynthesis; chorismate biosynthesis; chorismate from D-erythrose 4-phosphate and phosphoenolpyruvate: step 5/7. Functionally, catalyzes the specific phosphorylation of the 3-hydroxyl group of shikimic acid using ATP as a cosubstrate. This is Shikimate kinase from Aromatoleum aromaticum (strain DSM 19018 / LMG 30748 / EbN1) (Azoarcus sp. (strain EbN1)).